The primary structure comprises 838 residues: Collagen alpha-2(I) chain (838 aa).

Residues 1-838 are disordered; the sequence is GPMGIMGPRG…GTVGPAGIRS (838 aa). Positions 11–38 are enriched in low complexity; sequence FQGPAGEPGEPGQTGPAGARGPAGPPGK. A compositionally biased stretch (basic and acidic residues) spans 39–53; the sequence is AGEDGHPGKPGRPGE. Low complexity-rich tracts occupy residues 101–122, 137–147, 215–236, and 329–344; these read SRGS…SAGP, PVGNTGPAGPA, NGES…RGIP, and AGNR…NGAQ. Gly residues predominate over residues 351–360; that stretch reads GVQGGKGEQG. Low complexity-rich tracts occupy residues 407 to 424 and 436 to 446; these read PGES…SRGP and EPGVVGAPGTA. Residues 447-456 are compositionally biased toward gly residues; it reads GPAGSGGIPG. Composition is skewed to low complexity over residues 479–523, 530–550, and 568–581; these read VGTT…PRGT, VGPA…QPGA, and SAGP…PGPA. Residues 582–591 are compositionally biased toward gly residues; that stretch reads GSRGDGGPPG. The segment covering 593–602 has biased composition (low complexity); the sequence is TGFPGAAGRT. The span at 633–642 shows a compositional bias: gly residues; the sequence is GETGAGGPPG. Positions 649-689 are enriched in low complexity; sequence TAGPQGIIGAPGIIGIPGSRGIPGVSGSVGEPGPIGISGPP. The segment covering 693 to 702 has biased composition (gly residues); that stretch reads GPSGGVGNPG. Low complexity-rich tracts occupy residues 703 to 718, 736 to 758, and 766 to 781; these read VNGA…NPGN, YAGN…VGPA, and EPGP…AIGP.

The protein belongs to the fibrillar collagen family. In terms of assembly, trimers of one alpha 2(I) and two alpha 1(I) chains. Interacts (via C-terminus) with TMEM131 (via PapD-L domain); the interaction is direct and is involved in assembly and TRAPPIII ER-to-Golgi transport complex-dependent secretion of collagen. Post-translationally, prolines at the third position of the tripeptide repeating unit (G-X-Y) are hydroxylated in some or all of the chains. As to expression, forms the fibrils of tendon, ligaments and bones. In bones, the fibrils are mineralized with calcium hydroxyapatite.

It is found in the secreted. The protein resides in the extracellular space. Its subcellular location is the extracellular matrix. In terms of biological role, type I collagen is a member of group I collagen (fibrillar forming collagen). This Cyclopes didactylus (Silky anteater) protein is Collagen alpha-2(I) chain.